The primary structure comprises 422 residues: Enolase (422 aa).

Residue glutamine 162 participates in (2R)-2-phosphoglycerate binding. The active-site Proton donor is glutamate 204. Residues aspartate 241, glutamate 284, and aspartate 311 each contribute to the Mg(2+) site. The (2R)-2-phosphoglycerate site is built by lysine 336, arginine 365, serine 366, and lysine 387. Catalysis depends on lysine 336, which acts as the Proton acceptor.

Belongs to the enolase family. Mg(2+) serves as cofactor.

The protein localises to the cytoplasm. It is found in the secreted. The protein resides in the cell surface. The enzyme catalyses (2R)-2-phosphoglycerate = phosphoenolpyruvate + H2O. It participates in carbohydrate degradation; glycolysis; pyruvate from D-glyceraldehyde 3-phosphate: step 4/5. Its function is as follows. Catalyzes the reversible conversion of 2-phosphoglycerate (2-PG) into phosphoenolpyruvate (PEP). It is essential for the degradation of carbohydrates via glycolysis. The chain is Enolase from Bartonella quintana (strain Toulouse) (Rochalimaea quintana).